Here is a 161-residue protein sequence, read N- to C-terminus: MKYAHVGLNVTNLEKSIEFYSKLFGAEPVKVKPDYAKFLLESPGLNFTLNLRDEVNGNQVGHFGIQVESTEEVVAHKNRLAENGILSQYDEINTTCCYALQDKFWIHDPDGNEWEFFYTKTTVEENSTHPPTCCVNEPNVEKAECCSPTASSNKDTSNCCS.

The VOC domain maps to 2-119; sequence KYAHVGLNVT…DGNEWEFFYT (118 aa). Fe(2+) is bound by residues His5 and His62. Roxarsone (III) contacts are provided by Cys96 and Cys97. Glu115 is a binding site for Fe(2+).

It depends on Fe(2+) as a cofactor.

It catalyses the reaction methylarsonous acid + AH2 + O2 = arsenite + methanol + A + H(+). The enzyme catalyses roxarsone (III) + AH2 + O2 = 4-hydroxy-3-nitrocyclohexa-2,5-dien-1-one + arsenite + A + H(+). It carries out the reaction nitarsone (III) + AH2 + O2 = 4-nitrocyclohexa-2,5-dien-1-one + arsenite + A + H(+). The catalysed reaction is 4-aminophenylarsonous acid + AH2 + O2 = 4-aminocyclohexa-2,5-dien-1-one + arsenite + A. Inhibited in vitro by reagents that chemically modify histidine residues (diethylpyrocarbonate (DEPC)), aspartate or glutamate residues (1-ethyl-3-(3-(dimethylamino)propyl) carbodiimide (EDC)), or cysteine residues (N-ethylmaleimide (NEM) or iodoacetamide (IAA)). Its function is as follows. Nonheme iron-dependent dioxygenase that can break carbon-arsenic bonds, playing a role in the detoxification of environmental organoarsenical compounds. Catalyzes the oxygen-dependent demethylation of highly toxic methylarsonous acid (MAs(III)) to arsenite, which can then be exported out of the cell. Can also cleave the C-As bond in several trivalent aromatic arsenicals, including roxarsone (III), nitarsone (III) and (4-aminophenyl)arsonous acid. Organoarsenical degradation by this enzyme is proposed to have a significant impact on the arsenic biogeocycle that maintains a balance between organic and inorganic species. The protein is Trivalent organoarsenical cleaving enzyme of Bacillus sp. (strain MD1).